The primary structure comprises 329 residues: Ferredoxin--NADP reductase (329 aa).

Residues D28, Q36, Y41, A81, F115, D282, and T323 each contribute to the FAD site.

It belongs to the ferredoxin--NADP reductase type 2 family. In terms of assembly, homodimer. Requires FAD as cofactor.

The catalysed reaction is 2 reduced [2Fe-2S]-[ferredoxin] + NADP(+) + H(+) = 2 oxidized [2Fe-2S]-[ferredoxin] + NADPH. The protein is Ferredoxin--NADP reductase of Anaplasma marginale (strain St. Maries).